The primary structure comprises 141 residues: uncharacterized protein (141 aa).

It localises to the mitochondrion. This is an uncharacterized protein from Arabidopsis thaliana (Mouse-ear cress).